The primary structure comprises 155 residues: SsrA-binding protein (155 aa).

Residues aspartate 123–glutamine 142 show a composition bias toward basic and acidic residues. The tract at residues aspartate 123–threonine 155 is disordered. Basic residues predominate over residues leucine 143 to threonine 155.

Belongs to the SmpB family.

Its subcellular location is the cytoplasm. Its function is as follows. Required for rescue of stalled ribosomes mediated by trans-translation. Binds to transfer-messenger RNA (tmRNA), required for stable association of tmRNA with ribosomes. tmRNA and SmpB together mimic tRNA shape, replacing the anticodon stem-loop with SmpB. tmRNA is encoded by the ssrA gene; the 2 termini fold to resemble tRNA(Ala) and it encodes a 'tag peptide', a short internal open reading frame. During trans-translation Ala-aminoacylated tmRNA acts like a tRNA, entering the A-site of stalled ribosomes, displacing the stalled mRNA. The ribosome then switches to translate the ORF on the tmRNA; the nascent peptide is terminated with the 'tag peptide' encoded by the tmRNA and targeted for degradation. The ribosome is freed to recommence translation, which seems to be the essential function of trans-translation. The sequence is that of SsrA-binding protein from Methylibium petroleiphilum (strain ATCC BAA-1232 / LMG 22953 / PM1).